A 303-amino-acid chain; its full sequence is HTH-type transcriptional regulator YjiE (303 aa).

The HTH lysR-type domain occupies 11–68 (IETKWLYDFLTLEKCRNFSQAAVSRNVSQPAFSRRIRALEQAIGVELFNRQVTPLQLS). Positions 28–47 (FSQAAVSRNVSQPAFSRRIR) form a DNA-binding region, H-T-H motif.

It belongs to the LysR transcriptional regulatory family. In terms of assembly, forms dimers, tetramers and possibly dodecameric complexes; oligomerization may be governed by cellular concentrations. DNA-binding seems to decrease oligomerization.

In terms of biological role, protects cells from HOCl (hypochlorite) stress but not peroxide or diamide stress. Decreases the intracellular load of reactive oxygen species by up-regulating genes involved in methionine and cysteine biosynthesis and down-regulating Fur-regulated genes involved in iron acquisition. Has also been suggested to down-regulate expression of the flagellar regulon, decreasing motility, but this activity was not confirmed in a second study. The polypeptide is HTH-type transcriptional regulator YjiE (yjiE) (Escherichia coli (strain K12)).